Here is an 878-residue protein sequence, read N- to C-terminus: Phosphoenolpyruvate carboxylase (878 aa).

Catalysis depends on residues H138 and K544.

It belongs to the PEPCase type 1 family. Mg(2+) is required as a cofactor.

It carries out the reaction oxaloacetate + phosphate = phosphoenolpyruvate + hydrogencarbonate. Forms oxaloacetate, a four-carbon dicarboxylic acid source for the tricarboxylic acid cycle. The protein is Phosphoenolpyruvate carboxylase of Psychromonas ingrahamii (strain DSM 17664 / CCUG 51855 / 37).